The primary structure comprises 242 residues: Probable septum site-determining protein MinC (242 aa).

This sequence belongs to the MinC family. Interacts with MinD and FtsZ.

In terms of biological role, cell division inhibitor that blocks the formation of polar Z ring septums. Rapidly oscillates between the poles of the cell to destabilize FtsZ filaments that have formed before they mature into polar Z rings. Prevents FtsZ polymerization. The chain is Probable septum site-determining protein MinC from Brucella anthropi (strain ATCC 49188 / DSM 6882 / CCUG 24695 / JCM 21032 / LMG 3331 / NBRC 15819 / NCTC 12168 / Alc 37) (Ochrobactrum anthropi).